Consider the following 201-residue polypeptide: Oligoribonuclease (201 aa).

The Exonuclease domain occupies 20-183; it reads LVWLDMEMTG…ADIHESIDEL (164 aa). The active site involves tyrosine 141.

The protein belongs to the oligoribonuclease family.

It is found in the cytoplasm. In terms of biological role, 3'-to-5' exoribonuclease specific for small oligoribonucleotides. The polypeptide is Oligoribonuclease (Burkholderia pseudomallei (strain 1106a)).